The primary structure comprises 386 residues: Zinc finger CCCH domain-containing protein 2 (386 aa).

2 consecutive C3H1-type zinc fingers follow at residues 116 to 143 (HYSG…HGVF) and 151 to 175 (RYRT…HTPD). Disordered regions lie at residues 180–200 (LPAQ…ESYD) and 220–252 (SSPT…RRGS). Over residues 182-192 (AQQSSPRSVAS) the composition is skewed to polar residues. Residues 220-229 (SSPTSTLMSP) show a composition bias toward low complexity. Residues 230-241 (PKSPPSESPPLS) are compositionally biased toward pro residues.

It is found in the nucleus. Involved in leaf senescence delay. May repress jasmonic acid (JA) signaling role in promoting leaf senescence. May regulate panicle development and pollination/fertilization process. The chain is Zinc finger CCCH domain-containing protein 2 from Oryza sativa subsp. japonica (Rice).